The sequence spans 621 residues: UvrABC system protein C (621 aa).

The region spanning 20–98 (TAPGVYRMYA…IKSLTPRYNV (79 aa)) is the GIY-YIG domain. Positions 207–242 (DLLAEELIQAMQVASEHLEFEQAARLRDLLTSLRSM) constitute a UVR domain.

This sequence belongs to the UvrC family. In terms of assembly, interacts with UvrB in an incision complex.

Its subcellular location is the cytoplasm. In terms of biological role, the UvrABC repair system catalyzes the recognition and processing of DNA lesions. UvrC both incises the 5' and 3' sides of the lesion. The N-terminal half is responsible for the 3' incision and the C-terminal half is responsible for the 5' incision. This Xylella fastidiosa (strain M23) protein is UvrABC system protein C.